The sequence spans 130 residues: RutC family protein HI_0719 (130 aa).

C109 is an active-site residue.

The protein belongs to the RutC family. Homotrimer.

The chain is RutC family protein HI_0719 from Haemophilus influenzae (strain ATCC 51907 / DSM 11121 / KW20 / Rd).